The following is a 30-amino-acid chain: Cytochrome b6-f complex subunit 8 (30 aa).

A helical membrane pass occupies residues 4 to 24; sequence IISLGWGSLLAIFSFSIALVV.

This sequence belongs to the PetN family. In terms of assembly, the 4 large subunits of the cytochrome b6-f complex are cytochrome b6, subunit IV (17 kDa polypeptide, PetD), cytochrome f and the Rieske protein, while the 4 small subunits are PetG, PetL, PetM and PetN. The complex functions as a dimer.

It is found in the plastid. The protein localises to the chloroplast thylakoid membrane. Its function is as follows. Component of the cytochrome b6-f complex, which mediates electron transfer between photosystem II (PSII) and photosystem I (PSI), cyclic electron flow around PSI, and state transitions. This Gracilaria tenuistipitata var. liui (Red alga) protein is Cytochrome b6-f complex subunit 8.